Reading from the N-terminus, the 512-residue chain is Bifunctional purine biosynthesis protein PurH (512 aa).

An MGS-like domain is found at 1–146; sequence MTIKRALISV…KNHQDVTVIV (146 aa).

The protein belongs to the PurH family.

It catalyses the reaction (6R)-10-formyltetrahydrofolate + 5-amino-1-(5-phospho-beta-D-ribosyl)imidazole-4-carboxamide = 5-formamido-1-(5-phospho-D-ribosyl)imidazole-4-carboxamide + (6S)-5,6,7,8-tetrahydrofolate. It carries out the reaction IMP + H2O = 5-formamido-1-(5-phospho-D-ribosyl)imidazole-4-carboxamide. The protein operates within purine metabolism; IMP biosynthesis via de novo pathway; 5-formamido-1-(5-phospho-D-ribosyl)imidazole-4-carboxamide from 5-amino-1-(5-phospho-D-ribosyl)imidazole-4-carboxamide (10-formyl THF route): step 1/1. It participates in purine metabolism; IMP biosynthesis via de novo pathway; IMP from 5-formamido-1-(5-phospho-D-ribosyl)imidazole-4-carboxamide: step 1/1. The chain is Bifunctional purine biosynthesis protein PurH from Bacillus subtilis (strain 168).